The chain runs to 59 residues: Large ribosomal subunit protein bL32 (59 aa).

The tract at residues 1–22 (MAVQQNKKSPSKRGMHRSHDFL) is disordered.

The protein belongs to the bacterial ribosomal protein bL32 family.

This Thiobacillus denitrificans (strain ATCC 25259 / T1) protein is Large ribosomal subunit protein bL32.